Here is a 632-residue protein sequence, read N- to C-terminus: tRNA uridine 5-carboxymethylaminomethyl modification enzyme MnmG (632 aa).

Residues 15-20, I127, and S182 contribute to the FAD site; that span reads GAGHAG. 276–290 serves as a coordination point for NAD(+); sequence GPRYCPSIEDKIVRF. FAD is bound at residue Q373.

This sequence belongs to the MnmG family. As to quaternary structure, homodimer. Heterotetramer of two MnmE and two MnmG subunits. The cofactor is FAD.

It localises to the cytoplasm. Functionally, NAD-binding protein involved in the addition of a carboxymethylaminomethyl (cmnm) group at the wobble position (U34) of certain tRNAs, forming tRNA-cmnm(5)s(2)U34. The protein is tRNA uridine 5-carboxymethylaminomethyl modification enzyme MnmG of Streptococcus pyogenes serotype M4 (strain MGAS10750).